Here is a 433-residue protein sequence, read N- to C-terminus: tRNA-2-methylthio-N(6)-dimethylallyladenosine synthase (433 aa).

In terms of domain architecture, MTTase N-terminal spans 3-118 (KKLFIQTLGC…ISTAVKTPKF (116 aa)). [4Fe-4S] cluster is bound by residues cysteine 12, cysteine 49, cysteine 81, cysteine 150, cysteine 154, and cysteine 157. Positions 136-369 (RGSPYKSHIN…QSRHNEILDE (234 aa)) constitute a Radical SAM core domain. The TRAM domain occupies 372-433 (AAQEGKILDV…RMVLYGELAN (62 aa)).

Belongs to the methylthiotransferase family. MiaB subfamily. As to quaternary structure, monomer. Requires [4Fe-4S] cluster as cofactor.

It localises to the cytoplasm. The enzyme catalyses N(6)-dimethylallyladenosine(37) in tRNA + (sulfur carrier)-SH + AH2 + 2 S-adenosyl-L-methionine = 2-methylsulfanyl-N(6)-dimethylallyladenosine(37) in tRNA + (sulfur carrier)-H + 5'-deoxyadenosine + L-methionine + A + S-adenosyl-L-homocysteine + 2 H(+). Functionally, catalyzes the methylthiolation of N6-(dimethylallyl)adenosine (i(6)A), leading to the formation of 2-methylthio-N6-(dimethylallyl)adenosine (ms(2)i(6)A) at position 37 in tRNAs that read codons beginning with uridine. The polypeptide is tRNA-2-methylthio-N(6)-dimethylallyladenosine synthase (Campylobacter curvus (strain 525.92)).